Consider the following 815-residue polypeptide: Serotype-specific mannosyltransferase WbdA (815 aa).

The segment at 1-374 (MSRAIIENAG…WANTAHLAIE (374 aa)) is alpha-(1-&gt;2)-mannosyltransferase. The alpha-(1-&gt;3)-mannosyltransferase stretch occupies residues 431 to 804 (KLLVDISVLA…WKQSAEFLLK (374 aa)).

It belongs to the glycosyltransferase group 1 family. Glycosyltransferase 4 subfamily. Monomer. Interacts with the C-terminal region of WbdD.

The protein resides in the cell inner membrane. It carries out the reaction [alpha-D-Man-(1-&gt;3)-alpha-D-Man-(1-&gt;3)-alpha-D-Man-(1-&gt;2)-alpha-D-Man-(1-&gt;2)](n)-alpha-D-Man-(1-&gt;3)-alpha-D-Man-(1-&gt;3)-alpha-D-Man-(1-&gt;3)-alpha-D-GlcNAc-di-trans,octa-cis-undecaprenyl diphosphate + 2 GDP-alpha-D-mannose = alpha-D-Man-(1-&gt;2)-alpha-D-Man-(1-&gt;2)-[alpha-D-Man-(1-&gt;3)-alpha-D-Man-(1-&gt;3)-alpha-D-Man-(1-&gt;2)-alpha-D-Man-(1-&gt;2)](n)-alpha-D-Man-(1-&gt;3)-alpha-D-Man-(1-&gt;3)-alpha-D-Man-(1-&gt;3)-alpha-D-GlcNAc-di-trans,octa-cis-undecaprenyl diphosphate + 2 GDP + 2 H(+). It catalyses the reaction alpha-D-Man-(1-&gt;2)-alpha-D-Man-(1-&gt;2)-[alpha-D-Man-(1-&gt;3)-alpha-D-Man-(1-&gt;3)-alpha-D-Man-(1-&gt;2)-alpha-D-Man-(1-&gt;2)](n)-alpha-D-Man-(1-&gt;3)-alpha-D-Man-(1-&gt;3)-alpha-D-Man-(1-&gt;3)-alpha-D-GlcNAc-di-trans,octa-cis-undecaprenyl diphosphate + 2 GDP-alpha-D-mannose = [alpha-D-Man-(1-&gt;3)-alpha-D-Man-(1-&gt;3)-alpha-D-Man-(1-&gt;2)-alpha-D-Man-(1-&gt;2)](n+1)-alpha-D-Man-(1-&gt;3)-alpha-D-Man-(1-&gt;3)-alpha-D-Man-(1-&gt;3)-alpha-D-GlcNAc-di-trans,octa-cis-undecaprenyl diphosphate + 2 GDP + 2 H(+). It functions in the pathway bacterial outer membrane biogenesis; LPS O-antigen biosynthesis. Functionally, mannosyltransferase involved in the biosynthesis of the repeat unit of the lipopolysaccharide (LPS) O-antigen region. Catalyzes the polymerization of a tetrasaccharide repeat unit containing two alpha-(1-&gt;3)- and two alpha-(1-&gt;2)-linked mannopyranose residues. This is Serotype-specific mannosyltransferase WbdA from Escherichia coli.